A 33-amino-acid polypeptide reads, in one-letter code: IDPLTILKILKGGLKSICKHRKYLDKACASIGQ.

Heterodimer composed of subunit A and subunit B (DELTA-PSDTX-Pp1a); disulfide-linked. In terms of tissue distribution, expressed by the venom gland.

The protein resides in the secreted. In terms of biological role, this heterodimer has insecticidal and cytotoxic properties. Induces immediate paralysis when injected into blowflies (Lucilia cuprina), and then death within 24 hours. Also inhibits the growth of Aedes albopictus mosquito C6/36 cells. The sequence is that of DELTA-pseudomyrmecitoxin-Pp1a subunit B from Pseudomyrmex penetrator (Ant).